The chain runs to 182 residues: ADP-ribosylation factor 1 (182 aa).

Residue glycine 2 is the site of N-myristoyl glycine attachment. Residues 24–31 (GLDAAGKT), 67–71 (DVGGQ), and 126–129 (NKQD) contribute to the GTP site.

Belongs to the small GTPase superfamily. Arf family.

Its subcellular location is the golgi apparatus. The catalysed reaction is GTP + H2O = GDP + phosphate + H(+). Its function is as follows. GTP-binding protein involved in protein trafficking; may modulate vesicle budding and uncoating within the Golgi apparatus. This Dictyostelium discoideum (Social amoeba) protein is ADP-ribosylation factor 1 (arfA).